A 225-amino-acid chain; its full sequence is Ureidoacrylate amidohydrolase RutB (225 aa).

Asp22 serves as the catalytic Proton acceptor. The active site involves Lys131. Catalysis depends on Cys164, which acts as the Nucleophile.

Belongs to the isochorismatase family. RutB subfamily.

The enzyme catalyses (Z)-3-ureidoacrylate + H2O + H(+) = (Z)-3-aminoacrylate + NH4(+) + CO2. It catalyses the reaction (Z)-3-ureidoacrylate + H2O = (Z)-3-aminoacrylate + carbamate + H(+). It carries out the reaction (Z)-2-methylureidoacrylate + H2O + H(+) = (Z)-2-methylaminoacrylate + NH4(+) + CO2. In terms of biological role, hydrolyzes ureidoacrylate to form aminoacrylate and carbamate. The carbamate hydrolyzes spontaneously, thereby releasing one of the nitrogen atoms of the pyrimidine ring as ammonia and one of its carbon atoms as CO2. The protein is Ureidoacrylate amidohydrolase RutB of Caulobacter vibrioides (strain ATCC 19089 / CIP 103742 / CB 15) (Caulobacter crescentus).